The chain runs to 134 residues: T-cell receptor alpha chain V region RL-5 (134 aa).

Residues M1–T20 form the signal peptide. The interval N21 to R114 is v segment. The interval R115–N134 is j segment. A glycan (N-linked (GlcNAc...) asparagine) is linked at N134.

Post-translationally, rearrangement with the C region would elongate the sequence with Ile-Thr-; which creates a potential N-glycosylation site at Asn-134.

The polypeptide is T-cell receptor alpha chain V region RL-5 (Oryctolagus cuniculus (Rabbit)).